The primary structure comprises 636 residues: Ligand-gated ion channel 4 (636 aa).

A signal peptide spans 1–25 (MVICHSCTTFCILLVIDLVPCRIVG). Over 26-326 (MENVENRVMF…IHMHRRPLFY (301 aa)) the chain is Extracellular. Residues asparagine 45, asparagine 141, asparagine 179, and asparagine 227 are each glycosylated (N-linked (GlcNAc...) asparagine). Cysteine 240 and cysteine 254 are disulfide-bonded. Asparagine 284 carries an N-linked (GlcNAc...) asparagine glycan. Helical transmembrane passes span 327–347 (VFNH…GFLM), 357–377 (MIIT…ESIP), and 383–403 (VPLI…ATCV). Residues 404–602 (NVITLNMHRN…QLASVVDRLL (199 aa)) are Cytoplasmic-facing. The helical transmembrane segment at 603–623 (LCLFCTATLFTIICLLIVPVV) threads the bilayer.

The protein belongs to the ligand-gated ion channel (TC 1.A.9) family.

It localises to the postsynaptic cell membrane. The protein resides in the cell membrane. Acetylcholine receptor. The sequence is that of Ligand-gated ion channel 4 from Caenorhabditis briggsae.